Here is a 357-residue protein sequence, read N- to C-terminus: UDP-N-acetylglucosamine--N-acetylmuramyl-(pentapeptide) pyrophosphoryl-undecaprenol N-acetylglucosamine transferase (357 aa).

Residues 10–12, N124, S189, I244, and Q289 each bind UDP-N-acetyl-alpha-D-glucosamine; that span reads TGG.

It belongs to the glycosyltransferase 28 family. MurG subfamily.

It localises to the cell membrane. The catalysed reaction is Mur2Ac(oyl-L-Ala-gamma-D-Glu-L-Lys-D-Ala-D-Ala)-di-trans,octa-cis-undecaprenyl diphosphate + UDP-N-acetyl-alpha-D-glucosamine = beta-D-GlcNAc-(1-&gt;4)-Mur2Ac(oyl-L-Ala-gamma-D-Glu-L-Lys-D-Ala-D-Ala)-di-trans,octa-cis-undecaprenyl diphosphate + UDP + H(+). Its pathway is cell wall biogenesis; peptidoglycan biosynthesis. Cell wall formation. Catalyzes the transfer of a GlcNAc subunit on undecaprenyl-pyrophosphoryl-MurNAc-pentapeptide (lipid intermediate I) to form undecaprenyl-pyrophosphoryl-MurNAc-(pentapeptide)GlcNAc (lipid intermediate II). The sequence is that of UDP-N-acetylglucosamine--N-acetylmuramyl-(pentapeptide) pyrophosphoryl-undecaprenol N-acetylglucosamine transferase from Lactococcus lactis subsp. cremoris (strain MG1363).